Here is a 270-residue protein sequence, read N- to C-terminus: Zinc transporter ZupT (270 aa).

8 helical membrane-spanning segments follow: residues 8–28 (ILVVFLLTTLAGLATGIGGFI), 40–60 (LTFALGLSGGVMVYISLVELL), 78–98 (WIAIASFFGGIAVAALIDYLV), 131–151 (ILFALAIGIHNFPEGIATFAA), 162–182 (IALAVAVHNIPEGIAVAVPLY), 192–212 (LFYSFLSGLAEPVGAAIAMFF), 216–236 (FLTPTVLAVLFASVAGIMVFI), and 250–270 (HHHISIMGIIAGMLLMAIVLI). The Fe(2+) site is built by N141 and E144. Positions 144 and 169 each coordinate Zn(2+). N170, E173, and E202 together coordinate Fe(2+). E173 contributes to the Zn(2+) binding site.

It belongs to the ZIP transporter (TC 2.A.5) family. ZupT subfamily.

It is found in the cell membrane. The catalysed reaction is Zn(2+)(in) = Zn(2+)(out). Its function is as follows. Mediates zinc uptake. May also transport other divalent cations. The sequence is that of Zinc transporter ZupT from Akkermansia muciniphila (strain ATCC BAA-835 / DSM 22959 / JCM 33894 / BCRC 81048 / CCUG 64013 / CIP 107961 / Muc).